We begin with the raw amino-acid sequence, 413 residues long: Glucose-1-phosphate adenylyltransferase (413 aa).

Residues Tyr-102, Gly-167, 182–183 (EK), and Ser-200 contribute to the alpha-D-glucose 1-phosphate site.

Belongs to the bacterial/plant glucose-1-phosphate adenylyltransferase family. Homotetramer.

It carries out the reaction alpha-D-glucose 1-phosphate + ATP + H(+) = ADP-alpha-D-glucose + diphosphate. The protein operates within glycan biosynthesis; glycogen biosynthesis. In terms of biological role, involved in the biosynthesis of ADP-glucose, a building block required for the elongation reactions to produce glycogen. Catalyzes the reaction between ATP and alpha-D-glucose 1-phosphate (G1P) to produce pyrophosphate and ADP-Glc. The chain is Glucose-1-phosphate adenylyltransferase from Deinococcus deserti (strain DSM 17065 / CIP 109153 / LMG 22923 / VCD115).